We begin with the raw amino-acid sequence, 636 residues long: Threonine--tRNA ligase (636 aa).

In terms of domain architecture, TGS spans 1 to 60 (MPIINFNNKEILFNYPISIIEIIKKFDKNLSENCIAAKINGKLLDVSEIINYDGSLELVK). Residues 242-533 (DHRKIGKKLD…ITEEFSGKYP (292 aa)) are catalytic. Residues Cys-333, His-384, and His-510 each coordinate Zn(2+).

This sequence belongs to the class-II aminoacyl-tRNA synthetase family. In terms of assembly, homodimer. The cofactor is Zn(2+).

The protein localises to the cytoplasm. It catalyses the reaction tRNA(Thr) + L-threonine + ATP = L-threonyl-tRNA(Thr) + AMP + diphosphate + H(+). Functionally, catalyzes the attachment of threonine to tRNA(Thr) in a two-step reaction: L-threonine is first activated by ATP to form Thr-AMP and then transferred to the acceptor end of tRNA(Thr). Also edits incorrectly charged L-seryl-tRNA(Thr). This Wigglesworthia glossinidia brevipalpis protein is Threonine--tRNA ligase.